A 560-amino-acid polypeptide reads, in one-letter code: MNKLENLKQLLAGKFKIENFKFTHAVGDDVIEVPKEDAPALLLFLRESGQFDFLMDVCGADYPSREKRFDVVYNLFNSKDSSRLRVKAQVGEGESIGTAIPAYRGADWFEREAYDMFGIIFEGHPNLRKILTHHQFVGHPLRKDYDANNQQACTNSLPIHFNNEPGSPGDVLNDKYLPLNIGPSHTAMHGTLRVMAEMDGETIVRCNNEIGYLHRCFEKMAETHPYNQVIPYTDRLNYCSAPMNNIGYCKAVERLLGVEIPPKAQAMRVILAELSRIIDHTIAIGTGAMDLGALTSFFYMFGMREKVYGLFEKLCGARLTVSMTRIGGMAQDAPEGWFDEVLALVKEIRKGTDEMANMVIDNKIFIQRTKNVCPVSAADAIQWGYTGPMLRACGVNLDLRKAQPYYGYDALDFDVPVGTNGDIYDRYLVRFEEMRQSVRIIEQVCKNVPGGDYTIRDKGIVLPEKKDVYGNIEGLMNHFMLIIKGLRPPVGEVYDATEAANGELGFYLVSDGSANPYRLKVRPPCFAIYQSFPTVVKGAMLADAIATVASMNLIAGELDR.

The interval 2-157 (NKLENLKQLL…NNQQACTNSL (156 aa)) is NADH dehydrogenase I subunit C. Positions 175–560 (KYLPLNIGPS…MNLIAGELDR (386 aa)) are NADH dehydrogenase I subunit D.

In the N-terminal section; belongs to the complex I 30 kDa subunit family. The protein in the C-terminal section; belongs to the complex I 49 kDa subunit family. As to quaternary structure, NDH-1 is composed of 13 different subunits. Subunits NuoB, CD, E, F, and G constitute the peripheral sector of the complex.

It localises to the cytoplasm. The protein resides in the cell inner membrane. The catalysed reaction is a quinone + NADH + 5 H(+)(in) = a quinol + NAD(+) + 4 H(+)(out). In terms of biological role, NDH-1 shuttles electrons from NADH, via FMN and iron-sulfur (Fe-S) centers, to quinones in the respiratory chain. The immediate electron acceptor for the enzyme in this species is believed to be ubiquinone. Couples the redox reaction to proton translocation (for every two electrons transferred, four hydrogen ions are translocated across the cytoplasmic membrane), and thus conserves the redox energy in a proton gradient. This chain is NADH-quinone oxidoreductase subunit C/D, found in Bdellovibrio bacteriovorus (strain ATCC 15356 / DSM 50701 / NCIMB 9529 / HD100).